Here is a 403-residue protein sequence, read N- to C-terminus: F-box only protein 22 (403 aa).

Methionine 1 carries the N-acetylmethionine modification. An F-box domain is found at 21 to 67 (FVLSNLAEVVERVLTFLPAKALLRVACVCRLWRECVRRVLRTHRSVT). Threonine 127 is subject to Phosphothreonine. Residue serine 128 is modified to Phosphoserine. The residue at position 194 (lysine 194) is an N6-acetyllysine.

Directly interacts with SKP1 and CUL1. Interacts (via C-terminal) with KDM4A. Interacts with TP53. Interacts with MTOR; this interaction promotes 'lys-27'-linked ubiquitination of MTOR. As to quaternary structure, (Microbial infection) Interacts with SARS_COV-2 protein NSP5; this interaction attenuates NSP5-mediated inhibition of innate immunity. Phosphorylated by EIF2AK4 at Thr-127 causes cytoplasmic retention of FBXO22. As to expression, predominantly expressed in liver, also enriched in cardiac muscle.

The protein localises to the cytoplasm. It localises to the nucleus. Its subcellular location is the myofibril. It is found in the sarcomere. The protein resides in the z line. In terms of biological role, substrate-recognition component of the SCF (SKP1-CUL1-F-box protein)-type E3 ubiquitin ligase complex that is implicated in the control of various cellular processes such as cell cycle control, transcriptional regulation, DNA damage repair, and apoptosis. Promotes the proteasome-dependent degradation of key sarcomeric proteins, such as alpha-actinin (ACTN2) and filamin-C (FLNC), essential for maintenance of normal contractile function. Acts as a key regulator of histone methylation marks namely H3K9 and H3K36 methylation through the regulation of histone demethylase KDM4A protein levels. In complex with KDM4A, also regulates the abundance of TP53 by targeting methylated TP53 for degradation at the late senescent stage. Under oxidative stress, promotes the ubiquitination and degradation of BACH1. Mechanistically, reactive oxygen species (ROS) covalently modify cysteine residues on the bZIP domain of BACH1, leading to its release from chromatin and making it accessible to FBXO22. Upon amino acid depletion, mediates 'Lys-27'-linked ubiquitination of MTOR and thereby inhibits substrate recruitment to mTORC1. Also inhibits SARS-CoV-2 replication by inducing NSP5 degradation. The sequence is that of F-box only protein 22 (FBXO22) from Homo sapiens (Human).